The sequence spans 195 residues: Probable serine/threonine-protein kinase BUD32 homolog (195 aa).

The Protein kinase domain maps to methionine 1–glycine 195. Residue lysine 12 coordinates ATP. The active-site Proton acceptor is aspartate 107.

Belongs to the protein kinase superfamily. Tyr protein kinase family. BUD32 subfamily.

It is found in the cytoplasm. It catalyses the reaction L-seryl-[protein] + ATP = O-phospho-L-seryl-[protein] + ADP + H(+). The catalysed reaction is L-threonyl-[protein] + ATP = O-phospho-L-threonyl-[protein] + ADP + H(+). Could be involved in the formation of a threonylcarbamoyl group on adenosine at position 37 (t(6)A37) in tRNAs that read codons beginning with adenine. This Archaeoglobus fulgidus (strain ATCC 49558 / DSM 4304 / JCM 9628 / NBRC 100126 / VC-16) protein is Probable serine/threonine-protein kinase BUD32 homolog.